A 190-amino-acid chain; its full sequence is DNA dC-&gt;dU-editing enzyme APOBEC-3C (190 aa).

Positions Asp29–Leu138 constitute a CMP/dCMP-type deaminase domain. His66, Cys97, and Cys100 together coordinate Zn(2+).

It belongs to the cytidine and deoxycytidylate deaminase family. As to quaternary structure, homodimer. Interacts with TRIB3. Zn(2+) serves as cofactor.

It is found in the nucleus. Its subcellular location is the cytoplasm. The catalysed reaction is a 2'-deoxycytidine in single-stranded DNA + H2O + H(+) = a 2'-deoxyuridine in single-stranded DNA + NH4(+). Functionally, DNA deaminase (cytidine deaminase) which acts as an inhibitor of retrovirus replication and retrotransposon mobility via deaminase-dependent and -independent mechanisms. May also play a role in the epigenetic regulation of gene expression through the process of active DNA demethylation. The protein is DNA dC-&gt;dU-editing enzyme APOBEC-3C (APOBEC3C) of Gorilla gorilla gorilla (Western lowland gorilla).